A 623-amino-acid polypeptide reads, in one-letter code: V-type proton ATPase catalytic subunit A (623 aa).

252–259 (GAFGCGKT) contributes to the ATP binding site.

It belongs to the ATPase alpha/beta chains family. V-ATPase is a heteromultimeric enzyme composed of a peripheral catalytic V1 complex (main components: subunits A, B, C, D, E, and F) attached to an integral membrane V0 proton pore complex (main component: the proteolipid protein).

The enzyme catalyses ATP + H2O + 4 H(+)(in) = ADP + phosphate + 5 H(+)(out). Catalytic subunit of the peripheral V1 complex of vacuolar ATPase. V-ATPase vacuolar ATPase is responsible for acidifying a variety of intracellular compartments in eukaryotic cells. This is V-type proton ATPase catalytic subunit A (CVA69.24) from Gossypium hirsutum (Upland cotton).